Reading from the N-terminus, the 317-residue chain is Aspartate carbamoyltransferase catalytic subunit (317 aa).

Residues Arg-55 and Thr-56 each contribute to the carbamoyl phosphate site. Lys-83 contributes to the L-aspartate binding site. 3 residues coordinate carbamoyl phosphate: Arg-105, His-138, and Gln-141. Residues Arg-171 and Arg-225 each contribute to the L-aspartate site. Residues Gly-266 and Pro-267 each contribute to the carbamoyl phosphate site.

It belongs to the aspartate/ornithine carbamoyltransferase superfamily. ATCase family. In terms of assembly, heterododecamer (2C3:3R2) of six catalytic PyrB chains organized as two trimers (C3), and six regulatory PyrI chains organized as three dimers (R2).

The enzyme catalyses carbamoyl phosphate + L-aspartate = N-carbamoyl-L-aspartate + phosphate + H(+). Its pathway is pyrimidine metabolism; UMP biosynthesis via de novo pathway; (S)-dihydroorotate from bicarbonate: step 2/3. Catalyzes the condensation of carbamoyl phosphate and aspartate to form carbamoyl aspartate and inorganic phosphate, the committed step in the de novo pyrimidine nucleotide biosynthesis pathway. The chain is Aspartate carbamoyltransferase catalytic subunit from Mycobacteroides abscessus (strain ATCC 19977 / DSM 44196 / CCUG 20993 / CIP 104536 / JCM 13569 / NCTC 13031 / TMC 1543 / L948) (Mycobacterium abscessus).